Reading from the N-terminus, the 220-residue chain is UPF0758 protein CKO_05095 (220 aa).

The region spanning Ala98–Ile220 is the MPN domain. Zn(2+) is bound by residues His169, His171, and Asp182. The short motif at His169–Asp182 is the JAMM motif element.

This sequence belongs to the UPF0758 family. YicR subfamily.

In Citrobacter koseri (strain ATCC BAA-895 / CDC 4225-83 / SGSC4696), this protein is UPF0758 protein CKO_05095.